Reading from the N-terminus, the 303-residue chain is N-acetyl-D-glucosamine kinase (303 aa).

ATP contacts are provided by residues 4–11 (GFDVGGTK) and 133–140 (GFGGGLIY). Positions 157, 177, 179, and 184 each coordinate Zn(2+).

Belongs to the ROK (NagC/XylR) family. NagK subfamily.

It carries out the reaction N-acetyl-D-glucosamine + ATP = N-acetyl-D-glucosamine 6-phosphate + ADP + H(+). The protein operates within cell wall biogenesis; peptidoglycan recycling. In terms of biological role, catalyzes the phosphorylation of N-acetyl-D-glucosamine (GlcNAc) derived from cell-wall degradation, yielding GlcNAc-6-P. The sequence is that of N-acetyl-D-glucosamine kinase from Vibrio vulnificus (strain CMCP6).